The chain runs to 270 residues: Acyl-[acyl-carrier-protein]--UDP-N-acetylglucosamine O-acyltransferase (270 aa).

It belongs to the transferase hexapeptide repeat family. LpxA subfamily. In terms of assembly, homotrimer.

The protein localises to the cytoplasm. It catalyses the reaction a (3R)-hydroxyacyl-[ACP] + UDP-N-acetyl-alpha-D-glucosamine = a UDP-3-O-[(3R)-3-hydroxyacyl]-N-acetyl-alpha-D-glucosamine + holo-[ACP]. It functions in the pathway glycolipid biosynthesis; lipid IV(A) biosynthesis; lipid IV(A) from (3R)-3-hydroxytetradecanoyl-[acyl-carrier-protein] and UDP-N-acetyl-alpha-D-glucosamine: step 1/6. In terms of biological role, involved in the biosynthesis of lipid A, a phosphorylated glycolipid that anchors the lipopolysaccharide to the outer membrane of the cell. The chain is Acyl-[acyl-carrier-protein]--UDP-N-acetylglucosamine O-acyltransferase from Helicobacter pylori (strain HPAG1).